The sequence spans 327 residues: Tartrate-resistant acid phosphatase type 5 (327 aa).

The N-terminal stretch at 1 to 22 (MDSWVVLLGLQIIWLPLLTHGT) is a signal peptide. Fe cation is bound by residues aspartate 35, aspartate 73, tyrosine 76, and asparagine 112. N-linked (GlcNAc...) asparagine glycosylation is found at asparagine 118 and asparagine 149. An intrachain disulfide couples cysteine 163 to cysteine 221. Residues histidine 207, histidine 242, and histidine 244 each contribute to the Fe cation site.

In terms of assembly, exists either as monomer or, after proteolytic processing, as a dimer of two chains linked by disulfide bond(s). It depends on Fe cation as a cofactor. As to expression, characteristic constituent of osteoclasts.

It is found in the lysosome. It catalyses the reaction a phosphate monoester + H2O = an alcohol + phosphate. May play a role in the process of bone resorption. The osteoclastic trap acts on nucleotide tri- and diphosphates with higher affinity, compared with other substrates. This chain is Tartrate-resistant acid phosphatase type 5 (Acp5), found in Mus musculus (Mouse).